A 165-amino-acid chain; its full sequence is MFKNLFKIKEREPKEITVVAPITGEIIPLEEVPDPVFAQKMMGEGVAVKPANGEVISPVDGEVKLVFQTKHAIIVEAENNAEILIHIGLDTVNLEGEGFTAHVKDGDIVKVGDKLMSFDIATIEEKATSSITPIIISNTDNVREVKNIKVTEVTAGENQILQVIN.

In terms of domain architecture, PTS EIIA type-1 spans 34–138 (DPVFAQKMMG…SSITPIIISN (105 aa)). Zn(2+)-binding residues include His-71 and His-86. The active-site Tele-phosphohistidine intermediate; for EIIA activity is His-86. His-86 carries the post-translational modification Phosphohistidine; by HPr.

Heterodimer with glycerol kinase (glpk). Zn(2+) serves as cofactor.

The protein resides in the cytoplasm. Functionally, the phosphoenolpyruvate-dependent sugar phosphotransferase system (sugar PTS), a major carbohydrate active transport system, catalyzes the phosphorylation of incoming sugar substrates concomitantly with their translocation across the cell membrane. The enzyme II complex composed of PtsG and Crr is involved in glucose transport. The protein is PTS system glucose-specific EIIA component (crr) of Oceanobacillus iheyensis (strain DSM 14371 / CIP 107618 / JCM 11309 / KCTC 3954 / HTE831).